We begin with the raw amino-acid sequence, 712 residues long: Anaerobic ribonucleoside-triphosphate reductase (712 aa).

The ATP-cone domain occupies 3-92 (PHVMKRDGCK…EYRHDRDIQR (90 aa)). Positions 583–708 (KKVNPYDKID…VKRRVKHLGN (126 aa)) constitute a Glycine radical domain. Residues C644, C647, C662, and C665 each contribute to the Zn(2+) site. The residue at position 681 (G681) is a Glycine radical.

The protein belongs to the anaerobic ribonucleoside-triphosphate reductase family. As to quaternary structure, forms a tetramer composed of two NrdD and two NrdG subunits.

It catalyses the reaction a ribonucleoside 5'-triphosphate + formate + H(+) = a 2'-deoxyribonucleoside 5'-triphosphate + CO2 + H2O. Its activity is regulated as follows. Activated under anaerobic conditions by NrdG, a tightly associated activase. Activation involves the formation of a glycyl radical at Gly-681. Functionally, catalyzes the conversion of ribonucleotides into deoxyribonucleotides, which are required for DNA synthesis and repair. The chain is Anaerobic ribonucleoside-triphosphate reductase (nrdD) from Salmonella typhimurium (strain LT2 / SGSC1412 / ATCC 700720).